A 424-amino-acid polypeptide reads, in one-letter code: MLDIKFVRSNPELVLEGLKKRGSDISLDEFLKLDSMRREKLVVAEQLKNTRNVVSQEIGKLKKAGQDAEEKTLEMRKVSQKIKDMDDEIRNIEEKLQEILLSIPNIPHESVPVGKDENDNVEIRRWGKPRGFEFEPKPHWDLGEDLNILDFERGGKVTGARFSFYKGMGARLERALINFMLDLHTREHGYTEIFPPFIVNGDSMLGTGQLPKFAEDMFKLEGLNYYLIPTAEVPVTNLYRDEILAEEQLPIYHCAYSACFRAEAGAAGRDTRGLIRQHQFNKVELVKFSKPEESFDELERLTANAEKILQALGLPYRVVLLSTGDMGFTSAKTYDLEVWLPSYNAYKEISSCSNFLDFQARRANIKYRPTPKSKPEFVHTLNGSGIAVGRALSAILENYQEADGSITVPPVLVPYMGGIERITL.

230 to 232 contributes to the L-serine binding site; sequence TAE. 261-263 serves as a coordination point for ATP; it reads RAE. Glutamate 284 contacts L-serine. 348–351 contributes to the ATP binding site; it reads EISS. Position 384 (serine 384) interacts with L-serine.

The protein belongs to the class-II aminoacyl-tRNA synthetase family. Type-1 seryl-tRNA synthetase subfamily. Homodimer. The tRNA molecule binds across the dimer.

Its subcellular location is the cytoplasm. The enzyme catalyses tRNA(Ser) + L-serine + ATP = L-seryl-tRNA(Ser) + AMP + diphosphate + H(+). The catalysed reaction is tRNA(Sec) + L-serine + ATP = L-seryl-tRNA(Sec) + AMP + diphosphate + H(+). It participates in aminoacyl-tRNA biosynthesis; selenocysteinyl-tRNA(Sec) biosynthesis; L-seryl-tRNA(Sec) from L-serine and tRNA(Sec): step 1/1. Its function is as follows. Catalyzes the attachment of serine to tRNA(Ser). Is also able to aminoacylate tRNA(Sec) with serine, to form the misacylated tRNA L-seryl-tRNA(Sec), which will be further converted into selenocysteinyl-tRNA(Sec). This is Serine--tRNA ligase from Desulforamulus reducens (strain ATCC BAA-1160 / DSM 100696 / MI-1) (Desulfotomaculum reducens).